The chain runs to 863 residues: Bifunctional uridylyltransferase/uridylyl-removing enzyme (863 aa).

Residues 1–328 (MLFSPTLSSL…SSNQDTVIDQ (328 aa)) form a uridylyltransferase region. The segment at 329–687 (LDDDFQLINQ…ISNRFSLGGT (359 aa)) is uridylyl-removing. The HD domain occupies 446–568 (VDEHTLRVML…MQNQVRLDYL (123 aa)). 2 consecutive ACT domains span residues 688–764 (EVFI…KLPA) and 794–863 (EMEL…QQIR).

This sequence belongs to the GlnD family. Requires Mg(2+) as cofactor.

The enzyme catalyses [protein-PII]-L-tyrosine + UTP = [protein-PII]-uridylyl-L-tyrosine + diphosphate. It carries out the reaction [protein-PII]-uridylyl-L-tyrosine + H2O = [protein-PII]-L-tyrosine + UMP + H(+). Uridylyltransferase (UTase) activity is inhibited by glutamine, while glutamine activates uridylyl-removing (UR) activity. Modifies, by uridylylation and deuridylylation, the PII regulatory proteins (GlnB and homologs), in response to the nitrogen status of the cell that GlnD senses through the glutamine level. Under low glutamine levels, catalyzes the conversion of the PII proteins and UTP to PII-UMP and PPi, while under higher glutamine levels, GlnD hydrolyzes PII-UMP to PII and UMP (deuridylylation). Thus, controls uridylylation state and activity of the PII proteins, and plays an important role in the regulation of nitrogen assimilation and metabolism. In Haemophilus influenzae (strain ATCC 51907 / DSM 11121 / KW20 / Rd), this protein is Bifunctional uridylyltransferase/uridylyl-removing enzyme.